A 434-amino-acid chain; its full sequence is ATP-dependent RNA helicase RhlB (434 aa).

Positions 9-37 (KKFADFPLKPEILAALNENGFEFCTPIQA) match the Q motif motif. The 180-residue stretch at 40-219 (LPILLNAKDI…YDHMNDPEKV (180 aa)) folds into the Helicase ATP-binding domain. 53-60 (AQTGTGKT) provides a ligand contact to ATP. The short motif at 165-168 (DEAD) is the DEAD box element. One can recognise a Helicase C-terminal domain in the interval 243–390 (KMRLLLSLIE…VSNYDKDALL (148 aa)). The interval 390–434 (LDDIPPPARIHRKPPTSRTRDGGSKGAHRSGGNTSRPPRHRTRRP) is disordered.

It belongs to the DEAD box helicase family. RhlB subfamily. As to quaternary structure, component of the RNA degradosome, which is a multiprotein complex involved in RNA processing and mRNA degradation.

Its subcellular location is the cytoplasm. It carries out the reaction ATP + H2O = ADP + phosphate + H(+). Functionally, DEAD-box RNA helicase involved in RNA degradation. Has RNA-dependent ATPase activity and unwinds double-stranded RNA. This Shewanella frigidimarina (strain NCIMB 400) protein is ATP-dependent RNA helicase RhlB.